Consider the following 274-residue polypeptide: Thiamine kinase (274 aa).

The protein belongs to the thiamine kinase family.

The enzyme catalyses thiamine + ATP = thiamine phosphate + ADP + H(+). It functions in the pathway cofactor biosynthesis; thiamine diphosphate biosynthesis; thiamine phosphate from thiamine: step 1/1. Functionally, catalyzes the ATP-dependent phosphorylation of thiamine to thiamine phosphate. Is involved in thiamine salvage. In Shigella sonnei (strain Ss046), this protein is Thiamine kinase.